The sequence spans 110 residues: UPF0060 membrane protein Nmul_A0351 (110 aa).

The next 4 membrane-spanning stretches (helical) occupy residues 7–27 (LFLFLATALAEIVGCYLPYLW), 33–53 (SAWLLVPAAASLALFAWLLTL), 63–83 (AAYGGVYVSVAVLWLWAVDGV), and 87–107 (AWDMAGSLLALTGMAIIMFGP).

Belongs to the UPF0060 family.

It localises to the cell inner membrane. This Nitrosospira multiformis (strain ATCC 25196 / NCIMB 11849 / C 71) protein is UPF0060 membrane protein Nmul_A0351.